We begin with the raw amino-acid sequence, 464 residues long: 3-isopropylmalate dehydratase large subunit (464 aa).

[4Fe-4S] cluster contacts are provided by C337, C397, and C400.

The protein belongs to the aconitase/IPM isomerase family. LeuC type 1 subfamily. As to quaternary structure, heterodimer of LeuC and LeuD. The cofactor is [4Fe-4S] cluster.

It catalyses the reaction (2R,3S)-3-isopropylmalate = (2S)-2-isopropylmalate. Its pathway is amino-acid biosynthesis; L-leucine biosynthesis; L-leucine from 3-methyl-2-oxobutanoate: step 2/4. Catalyzes the isomerization between 2-isopropylmalate and 3-isopropylmalate, via the formation of 2-isopropylmaleate. This is 3-isopropylmalate dehydratase large subunit from Bacillus cereus (strain B4264).